A 487-amino-acid chain; its full sequence is Structure-specific endonuclease subunit SLX1 (487 aa).

One can recognise a GIY-YIG domain in the interval 27–109 (PFYACYLLRS…QKPELSRHLR (83 aa)). The segment at 44–69 (RTYVGSTPDPPRRIRQHNGELKQGAW) is disordered. The SLX1-type zinc-finger motif lies at 262–328 (CHLCQERIAF…LPYQGLCPNC (67 aa)). The segment covering 359–396 (KAEKAEKAEKAEKAEKAEKAEKAGRKVRQREMKTKKGD) has biased composition (basic and acidic residues). Disordered stretches follow at residues 359 to 407 (KAEK…QPES) and 433 to 475 (PARS…SEPE). The span at 397–407 (QSNGTVAQPES) shows a compositional bias: polar residues. The segment covering 438–455 (KSKDVGGEGIRHSTHTDD) has biased composition (basic and acidic residues). The segment covering 465 to 475 (ETEDESESEPE) has biased composition (acidic residues).

It belongs to the SLX1 family. Forms a heterodimer with SLX4. A divalent metal cation is required as a cofactor.

The protein localises to the nucleus. Catalytic subunit of the SLX1-SLX4 structure-specific endonuclease that resolves DNA secondary structures generated during DNA repair and recombination. Has endonuclease activity towards branched DNA substrates, introducing single-strand cuts in duplex DNA close to junctions with ss-DNA. The polypeptide is Structure-specific endonuclease subunit SLX1 (Cryptococcus neoformans var. neoformans serotype D (strain B-3501A) (Filobasidiella neoformans)).